Reading from the N-terminus, the 501-residue chain is L-arabinose isomerase (501 aa).

Positions 306, 333, 350, and 450 each coordinate Mn(2+).

Belongs to the arabinose isomerase family. As to quaternary structure, homohexamer. Mn(2+) is required as a cofactor.

The enzyme catalyses beta-L-arabinopyranose = L-ribulose. It participates in carbohydrate degradation; L-arabinose degradation via L-ribulose; D-xylulose 5-phosphate from L-arabinose (bacterial route): step 1/3. Catalyzes the conversion of L-arabinose to L-ribulose. The chain is L-arabinose isomerase from Pectobacterium carotovorum subsp. carotovorum (strain PC1).